Consider the following 132-residue polypeptide: DNA-directed RNA polymerase subunit omega (132 aa).

The segment at 100-119 (VSAEEEASHGTAGMSAEELE) is disordered.

The protein belongs to the RNA polymerase subunit omega family. The RNAP catalytic core consists of 2 alpha, 1 beta, 1 beta' and 1 omega subunit. When a sigma factor is associated with the core the holoenzyme is formed, which can initiate transcription.

It carries out the reaction RNA(n) + a ribonucleoside 5'-triphosphate = RNA(n+1) + diphosphate. In terms of biological role, promotes RNA polymerase assembly. Latches the N- and C-terminal regions of the beta' subunit thereby facilitating its interaction with the beta and alpha subunits. In Gluconacetobacter diazotrophicus (strain ATCC 49037 / DSM 5601 / CCUG 37298 / CIP 103539 / LMG 7603 / PAl5), this protein is DNA-directed RNA polymerase subunit omega.